A 202-amino-acid chain; its full sequence is 3-isopropylmalate dehydratase small subunit (202 aa).

It belongs to the LeuD family. LeuD type 1 subfamily. In terms of assembly, heterodimer of LeuC and LeuD.

The catalysed reaction is (2R,3S)-3-isopropylmalate = (2S)-2-isopropylmalate. Its pathway is amino-acid biosynthesis; L-leucine biosynthesis; L-leucine from 3-methyl-2-oxobutanoate: step 2/4. Its function is as follows. Catalyzes the isomerization between 2-isopropylmalate and 3-isopropylmalate, via the formation of 2-isopropylmaleate. The sequence is that of 3-isopropylmalate dehydratase small subunit from Caulobacter vibrioides (strain ATCC 19089 / CIP 103742 / CB 15) (Caulobacter crescentus).